The chain runs to 309 residues: Anamorsin (309 aa).

Residues 6 to 172 are N-terminal SAM-like domain; the sequence is ISPGQLVAVF…KPNFEVGSSS (167 aa). Residues 173-222 are linker; the sequence is QLKLLHKKSSSVKPVVDPATAKLWTLSANDMEDDSMDLIDSDELLDPEDL. Phosphoserine occurs at positions 182, 183, and 213. [2Fe-2S] cluster contacts are provided by C235, C244, C247, and C249. Positions 235–249 are fe-S binding site A; that stretch reads CGEGKKRKACKNCTC. S269 carries the phosphoserine modification. [4Fe-4S] cluster-binding residues include C271, C274, C282, and C285. Short sequence motifs (cx2C motif) lie at residues 271–274 and 282–285; these read CGNC and CANC. Positions 271–285 are fe-S binding site B; that stretch reads CGNCYLGDAFRCANC. Phosphoserine is present on residues S302 and S304.

Belongs to the anamorsin family. In terms of assembly, monomer. Interacts with NDOR1. Interacts with CHCHD4. [2Fe-2S] cluster serves as cofactor. The cofactor is [4Fe-4S] cluster.

It is found in the cytoplasm. It localises to the nucleus. The protein localises to the mitochondrion intermembrane space. Its function is as follows. Component of the cytosolic iron-sulfur (Fe-S) protein assembly (CIA) machinery required for the maturation of extramitochondrial Fe-S proteins. Part of an electron transfer chain functioning in an early step of cytosolic Fe-S biogenesis, facilitating the de novo assembly of a [4Fe-4S] cluster on the scaffold complex NUBP1-NUBP2. Electrons are transferred to CIAPIN1 from NADPH via the FAD- and FMN-containing protein NDOR1. NDOR1-CIAPIN1 are also required for the assembly of the diferric tyrosyl radical cofactor of ribonucleotide reductase (RNR), probably by providing electrons for reduction during radical cofactor maturation in the catalytic small subunit. Has anti-apoptotic effects in the cell. Involved in negative control of cell death upon cytokine withdrawal. Promotes development of hematopoietic cells. This is Anamorsin from Rattus norvegicus (Rat).